A 349-amino-acid chain; its full sequence is tRNA pseudouridine synthase D (349 aa).

Phe27 serves as a coordination point for substrate. Asp80 acts as the Nucleophile in catalysis. Residue Asn129 participates in substrate binding. A TRUD domain is found at 155-303 (GVPNYFGAQR…VEAARRAMLL (149 aa)). Phe329 is a substrate binding site.

It belongs to the pseudouridine synthase TruD family.

The enzyme catalyses uridine(13) in tRNA = pseudouridine(13) in tRNA. Responsible for synthesis of pseudouridine from uracil-13 in transfer RNAs. This chain is tRNA pseudouridine synthase D, found in Klebsiella pneumoniae subsp. pneumoniae (strain ATCC 700721 / MGH 78578).